Consider the following 128-residue polypeptide: Small ribosomal subunit protein uS11 (128 aa).

It belongs to the universal ribosomal protein uS11 family. As to quaternary structure, part of the 30S ribosomal subunit. Interacts with proteins S7 and S18. Binds to IF-3.

Its function is as follows. Located on the platform of the 30S subunit, it bridges several disparate RNA helices of the 16S rRNA. Forms part of the Shine-Dalgarno cleft in the 70S ribosome. The protein is Small ribosomal subunit protein uS11 of Desulfosudis oleivorans (strain DSM 6200 / JCM 39069 / Hxd3) (Desulfococcus oleovorans).